The primary structure comprises 209 residues: Phosphoheptose isomerase (209 aa).

In terms of domain architecture, SIS spans 50-209 (IADTFREGGK…ELVEKMMGYD (160 aa)). 65–67 (NGG) serves as a coordination point for substrate. Positions 74 and 78 each coordinate Zn(2+). Substrate is bound by residues E78, 109–110 (ND), 135–137 (STS), S140, and Q188. Zn(2+) is bound by residues Q188 and H196.

Belongs to the SIS family. GmhA subfamily. It depends on Zn(2+) as a cofactor.

The protein localises to the cytoplasm. The enzyme catalyses 2 D-sedoheptulose 7-phosphate = D-glycero-alpha-D-manno-heptose 7-phosphate + D-glycero-beta-D-manno-heptose 7-phosphate. It functions in the pathway carbohydrate biosynthesis; D-glycero-D-manno-heptose 7-phosphate biosynthesis; D-glycero-alpha-D-manno-heptose 7-phosphate and D-glycero-beta-D-manno-heptose 7-phosphate from sedoheptulose 7-phosphate: step 1/1. Catalyzes the isomerization of sedoheptulose 7-phosphate in D-glycero-D-manno-heptose 7-phosphate. The sequence is that of Phosphoheptose isomerase from Chlorobaculum tepidum (strain ATCC 49652 / DSM 12025 / NBRC 103806 / TLS) (Chlorobium tepidum).